Here is a 362-residue protein sequence, read N- to C-terminus: Tryptophan 2,3-dioxygenase (362 aa).

Substrate contacts are provided by residues 40 to 44 (FIIVH) and Arg-111. Residue His-297 participates in heme binding. Thr-311 is a binding site for substrate.

It belongs to the tryptophan 2,3-dioxygenase family. As to quaternary structure, homotetramer. The cofactor is heme.

It carries out the reaction L-tryptophan + O2 = N-formyl-L-kynurenine. Its pathway is amino-acid degradation; L-tryptophan degradation via kynurenine pathway; L-kynurenine from L-tryptophan: step 1/2. Functionally, heme-dependent dioxygenase that catalyzes the oxidative cleavage of the L-tryptophan (L-Trp) pyrrole ring and converts L-tryptophan to N-formyl-L-kynurenine. Catalyzes the oxidative cleavage of the indole moiety. This chain is Tryptophan 2,3-dioxygenase, found in Alteromonas mediterranea (strain DSM 17117 / CIP 110805 / LMG 28347 / Deep ecotype).